Reading from the N-terminus, the 285-residue chain is Pantothenate synthetase (285 aa).

30-37 (MGNLHDGH) provides a ligand contact to ATP. His37 acts as the Proton donor in catalysis. Gln61 serves as a coordination point for (R)-pantoate. Gln61 lines the beta-alanine pocket. ATP is bound at residue 148 to 151 (GEKD). Residue Gln154 participates in (R)-pantoate binding. 185–188 (RSSR) contributes to the ATP binding site.

This sequence belongs to the pantothenate synthetase family. In terms of assembly, homodimer.

The protein resides in the cytoplasm. The catalysed reaction is (R)-pantoate + beta-alanine + ATP = (R)-pantothenate + AMP + diphosphate + H(+). It participates in cofactor biosynthesis; (R)-pantothenate biosynthesis; (R)-pantothenate from (R)-pantoate and beta-alanine: step 1/1. Catalyzes the condensation of pantoate with beta-alanine in an ATP-dependent reaction via a pantoyl-adenylate intermediate. This is Pantothenate synthetase from Alcanivorax borkumensis (strain ATCC 700651 / DSM 11573 / NCIMB 13689 / SK2).